The chain runs to 123 residues: Holo-[acyl-carrier-protein] synthase (123 aa).

Residues Asp9 and Glu57 each contribute to the Mg(2+) site.

It belongs to the P-Pant transferase superfamily. AcpS family. The cofactor is Mg(2+).

It localises to the cytoplasm. It carries out the reaction apo-[ACP] + CoA = holo-[ACP] + adenosine 3',5'-bisphosphate + H(+). In terms of biological role, transfers the 4'-phosphopantetheine moiety from coenzyme A to a Ser of acyl-carrier-protein. The chain is Holo-[acyl-carrier-protein] synthase from Streptomyces avermitilis (strain ATCC 31267 / DSM 46492 / JCM 5070 / NBRC 14893 / NCIMB 12804 / NRRL 8165 / MA-4680).